Here is a 271-residue protein sequence, read N- to C-terminus: DNA repair protein RecO (271 aa).

Belongs to the RecO family.

Involved in DNA repair and RecF pathway recombination. This Synechococcus sp. (strain CC9311) protein is DNA repair protein RecO.